A 786-amino-acid chain; its full sequence is Endonuclease MutS2 (786 aa).

335 to 342 (GPNTGGKT) provides a ligand contact to ATP. Residues 529–549 (SQKNAERERKEAEEHRKQSEK) are disordered. One can recognise a Smr domain in the interval 711-786 (LDLRGERYED…GLGVTVVELK (76 aa)).

Belongs to the DNA mismatch repair MutS family. MutS2 subfamily. As to quaternary structure, homodimer. Binds to stalled ribosomes, contacting rRNA.

Functionally, endonuclease that is involved in the suppression of homologous recombination and thus may have a key role in the control of bacterial genetic diversity. In terms of biological role, acts as a ribosome collision sensor, splitting the ribosome into its 2 subunits. Detects stalled/collided 70S ribosomes which it binds and splits by an ATP-hydrolysis driven conformational change. Acts upstream of the ribosome quality control system (RQC), a ribosome-associated complex that mediates the extraction of incompletely synthesized nascent chains from stalled ribosomes and their subsequent degradation. Probably generates substrates for RQC. This chain is Endonuclease MutS2, found in Bacillus mycoides (strain KBAB4) (Bacillus weihenstephanensis).